The following is a 417-amino-acid chain: Serpin H1 (417 aa).

Residues 1–18 (MRSLLLLSAFCLLEAALA) form the signal peptide. Residue Lys-94 is modified to N6-succinyllysine. 2 N-linked (GlcNAc...) asparagine glycosylation sites follow: Asn-120 and Asn-125. Ser-141 is modified (phosphoserine). Residue Lys-206 is modified to N6-acetyllysine. The residue at position 295 (Lys-295) is an N6-succinyllysine. Lys-318 carries the N6-acetyllysine modification. Positions 414-417 (RDEL) match the Prevents secretion from ER motif.

The protein belongs to the serpin family.

The protein resides in the endoplasmic reticulum lumen. In terms of biological role, binds specifically to collagen. Could be involved as a chaperone in the biosynthetic pathway of collagen. This is Serpin H1 (SERPINH1) from Pongo abelii (Sumatran orangutan).